Consider the following 652-residue polypeptide: Putative enzymatic polyprotein (652 aa).

Residues 21-99 (YHGLFDTGAN…SPDIIIGATF (79 aa)) form the Peptidase A2 domain. The active site involves D26. Residues 231-413 (FIEEKTNFED…EKIDFLGVQI (183 aa)) enclose the Reverse transcriptase domain. Residues D301, D364, and D365 each contribute to the Mg(2+) site.

The enzyme catalyses DNA(n) + a 2'-deoxyribonucleoside 5'-triphosphate = DNA(n+1) + diphosphate. It carries out the reaction Endonucleolytic cleavage to 5'-phosphomonoester.. In terms of biological role, encodes for at least two polypeptides: protease (PR) and reverse transcriptase (RT). The protease processes the polyprotein in cis. Reverse transcriptase is multifunctional enzyme that converts the viral RNA genome into dsDNA in viral cytoplasmic capsids. This enzyme displays a DNA polymerase activity that can copy either DNA or RNA templates, and a ribonuclease H (RNase H) activity that cleaves the RNA strand of RNA-DNA heteroduplexes in a partially processive 3'- to 5'-endonucleasic mode. Neo-synthesized pregenomic RNA (pgRNA) are encapsidated, and reverse-transcribed inside the nucleocapsid. Partial (+)DNA is synthesized from the (-)DNA template and generates the relaxed circular DNA (RC-DNA) genome. After budding and infection, the RC-DNA migrates in the nucleus, and is converted into a plasmid-like covalently closed circular DNA (cccDNA). The polypeptide is Putative enzymatic polyprotein (Cassava vein mosaic virus (CsVMV)).